The sequence spans 131 residues: Large ribosomal subunit protein bL17 (131 aa).

Belongs to the bacterial ribosomal protein bL17 family. Part of the 50S ribosomal subunit. Contacts protein L32.

In Burkholderia mallei (strain NCTC 10229), this protein is Large ribosomal subunit protein bL17.